Reading from the N-terminus, the 202-residue chain is UPF0316 protein SH1041 (202 aa).

A run of 3 helical transmembrane segments spans residues 8–28 (PWSM…FLTM), 40–60 (MAAA…GMVM), and 66–86 (IQNI…GMKI).

This sequence belongs to the UPF0316 family.

The protein localises to the cell membrane. This Staphylococcus haemolyticus (strain JCSC1435) protein is UPF0316 protein SH1041.